We begin with the raw amino-acid sequence, 363 residues long: MKFLDEAKVYIRSGDGGAGSVSFRREKFIEFGGPDGGDGGRGGDVWVEAVNGLNTLIDFRYQQHFKATIGTHGMGRNRTGANGSDVTLKVPVGTQIFEEDRETMICDLTEEGQRYCLAHGGNGGFGNAHFKTSVNQAPDWANPGLPGEEKTIWLRLKLIADAGLVGLPNAGKSTFLASVTRARPKIANYPFTTLHPNLGVATVDEREFILADIPGLIEGAHEGVGIGDRFLGHVERTRVLLHLVSAQEEKVGKAYKTVKHELEAYGNELTDKPEIVALSQIDVLDEAELKKKTKELAKACGRTPFQISAVTGRGMTEVLRALRDIIVQENAEEKPAKAPKLRHRDMIVSEENNQGEDGADDQP.

One can recognise an Obg domain in the interval 1–159 (MKFLDEAKVY…KTIWLRLKLI (159 aa)). An OBG-type G domain is found at 160–327 (ADAGLVGLPN…VLRALRDIIV (168 aa)). Residues 166–173 (GLPNAGKS), 191–195 (FTTLH), 212–215 (DIPG), 279–282 (SQID), and 308–310 (SAV) each bind GTP. Mg(2+) contacts are provided by S173 and T193. The disordered stretch occupies residues 332-363 (EEKPAKAPKLRHRDMIVSEENNQGEDGADDQP). Acidic residues predominate over residues 353–363 (NQGEDGADDQP).

This sequence belongs to the TRAFAC class OBG-HflX-like GTPase superfamily. OBG GTPase family. In terms of assembly, monomer. Requires Mg(2+) as cofactor.

The protein localises to the cytoplasm. In terms of biological role, an essential GTPase which binds GTP, GDP and possibly (p)ppGpp with moderate affinity, with high nucleotide exchange rates and a fairly low GTP hydrolysis rate. Plays a role in control of the cell cycle, stress response, ribosome biogenesis and in those bacteria that undergo differentiation, in morphogenesis control. This chain is GTPase Obg, found in Rhizobium etli (strain ATCC 51251 / DSM 11541 / JCM 21823 / NBRC 15573 / CFN 42).